Here is a 180-residue protein sequence, read N- to C-terminus: MADPELQLVARRIRSFPNFPIPGVLFRDISPVLKDPTSFRASINLLANHLKKAHGGRIDYIAGLDSRGFLFGPSLAQELGLGCILIRKRGKLPGPTVCASYALEYGKGELEIQRDALEPGQKVVVVDDLLATGGTMCAACELLGQLRAEVLECVSLVELTSLKGREKLGAVPFFSLLQYE.

Alanine 2 is modified (N-acetylalanine). Serine 15 and serine 30 each carry phosphoserine. A Phosphotyrosine modification is found at tyrosine 60. A Phosphoserine modification is found at serine 66. Threonine 135 is subject to Phosphothreonine.

Belongs to the purine/pyrimidine phosphoribosyltransferase family. Homodimer.

The protein resides in the cytoplasm. It carries out the reaction AMP + diphosphate = 5-phospho-alpha-D-ribose 1-diphosphate + adenine. It functions in the pathway purine metabolism; AMP biosynthesis via salvage pathway; AMP from adenine: step 1/1. Catalyzes a salvage reaction resulting in the formation of AMP, that is energically less costly than de novo synthesis. The protein is Adenine phosphoribosyltransferase of Bos taurus (Bovine).